The following is a 339-amino-acid chain: Phenylalanine--tRNA ligase alpha subunit (339 aa).

E262 contacts Mg(2+).

Belongs to the class-II aminoacyl-tRNA synthetase family. Phe-tRNA synthetase alpha subunit type 1 subfamily. As to quaternary structure, tetramer of two alpha and two beta subunits. It depends on Mg(2+) as a cofactor.

The protein localises to the cytoplasm. It carries out the reaction tRNA(Phe) + L-phenylalanine + ATP = L-phenylalanyl-tRNA(Phe) + AMP + diphosphate + H(+). The chain is Phenylalanine--tRNA ligase alpha subunit from Neisseria gonorrhoeae (strain ATCC 700825 / FA 1090).